Reading from the N-terminus, the 465-residue chain is 23S rRNA (uracil(1939)-C(5))-methyltransferase RlmD (465 aa).

The interval Met1–Ala22 is disordered. Residues Pro16 to Asp80 form the TRAM domain. Cys93, Cys99, Cys102, and Cys181 together coordinate [4Fe-4S] cluster. Positions 289, 318, 323, 339, 367, and 388 each coordinate S-adenosyl-L-methionine. Cys421 serves as the catalytic Nucleophile.

The protein belongs to the class I-like SAM-binding methyltransferase superfamily. RNA M5U methyltransferase family. RlmD subfamily.

It catalyses the reaction uridine(1939) in 23S rRNA + S-adenosyl-L-methionine = 5-methyluridine(1939) in 23S rRNA + S-adenosyl-L-homocysteine + H(+). Functionally, catalyzes the formation of 5-methyl-uridine at position 1939 (m5U1939) in 23S rRNA. The protein is 23S rRNA (uracil(1939)-C(5))-methyltransferase RlmD of Burkholderia cenocepacia (strain HI2424).